A 202-amino-acid chain; its full sequence is MDYFPMIFALLFVAFQGAPEAAVLGTELSTGAESGGERPVPTTPWRPRRSKRCSCSSLMDKECVYFCHLDIIWVNTPEHVVPYGLGSPSRSKRSLKDFFPTKATVHRKRCQCASQTDKKCQNFCQAGKELKDQDSMEKAWDNRKRGKDCPKLGEKCLQQQLVVGRKTRRLETISNSIKTSFRVAKLKAQLYRDKKVIYSRAH.

The N-terminal stretch at 1–25 is a signal peptide; sequence MDYFPMIFALLFVAFQGAPEAAVLG. A propeptide spanning residues 26–50 is cleaved from the precursor; the sequence is TELSTGAESGGERPVPTTPWRPRRS. The segment at 29-48 is disordered; it reads STGAESGGERPVPTTPWRPR. 2 disulfides stabilise this stretch: C53–C67 and C55–C63. Residues 74-202 constitute a propeptide that is removed on maturation; that stretch reads VNTPEHVVPY…DKKVIYSRAH (129 aa). Residues 110 to 124 are endothelin-like; the sequence is CQCASQTDKKCQNFC.

Belongs to the endothelin/sarafotoxin family.

It is found in the secreted. Endothelins are endothelium-derived vasoconstrictor peptides. Probable ligand for G-protein coupled receptors EDNRA and EDNRB which activates PTK2B, BCAR1, BCAR3 and, GTPases RAP1 and RHOA cascade in glomerular mesangial cells. Also binds the DEAR/FBXW7-AS1 receptor. Promotes mesenteric arterial wall remodeling via activation of ROCK signaling and subsequent colocalization of NFATC3 with F-actin filaments. NFATC3 then translocates to the nucleus where it subsequently promotes the transcription of the smooth muscle hypertrophy and differentiation marker ACTA2. This chain is Endothelin-1 (EDN1), found in Ovis aries (Sheep).